A 336-amino-acid chain; its full sequence is Biotin synthase (336 aa).

The Radical SAM core domain occupies 54-281 (NAIQLSTLLS…KAMVRLSAGR (228 aa)). [4Fe-4S] cluster contacts are provided by C69, C73, and C76. Residues C113, C144, C204, and R276 each coordinate [2Fe-2S] cluster.

Belongs to the radical SAM superfamily. Biotin synthase family. Homodimer. Requires [4Fe-4S] cluster as cofactor. The cofactor is [2Fe-2S] cluster.

The catalysed reaction is (4R,5S)-dethiobiotin + (sulfur carrier)-SH + 2 reduced [2Fe-2S]-[ferredoxin] + 2 S-adenosyl-L-methionine = (sulfur carrier)-H + biotin + 2 5'-deoxyadenosine + 2 L-methionine + 2 oxidized [2Fe-2S]-[ferredoxin]. It participates in cofactor biosynthesis; biotin biosynthesis; biotin from 7,8-diaminononanoate: step 2/2. Catalyzes the conversion of dethiobiotin (DTB) to biotin by the insertion of a sulfur atom into dethiobiotin via a radical-based mechanism. The sequence is that of Biotin synthase from Burkholderia pseudomallei (strain 1106a).